Reading from the N-terminus, the 442-residue chain is Type 3 secretion system ATPase (442 aa).

Residue 173-178 (GVGKST) participates in ATP binding.

It belongs to the ATPase alpha/beta chains family. T3SS ATPase subfamily. In terms of assembly, the core secretion machinery of the T3SS is composed of approximately 20 different proteins, including cytoplasmic components, a base, an export apparatus and a needle. This subunit is part of the cytosolic complex. Forms homohexamers.

It localises to the cytoplasm. The enzyme catalyses ATP + H2O + cellular proteinSide 1 = ADP + phosphate + cellular proteinSide 2.. Functionally, ATPase component of the type III secretion system (T3SS), also called injectisome, which is used to inject bacterial effector proteins into eukaryotic host cells. Acts as a molecular motor to provide the energy that is required for the export of proteins. Required for type III secretion apparatus (T3SA) formation, proper protein secretion, host cell invasion and virulence. May play a critical role in T3SS substrate recognition, disassembly of the effector/chaperone complex and unfolding of the effector in an ATP-dependent manner prior to secretion. The polypeptide is Type 3 secretion system ATPase (Xanthomonas euvesicatoria).